A 504-amino-acid polypeptide reads, in one-letter code: ATP synthase subunit alpha 2 (504 aa).

G169–T176 provides a ligand contact to ATP.

Belongs to the ATPase alpha/beta chains family. F-type ATPases have 2 components, CF(1) - the catalytic core - and CF(0) - the membrane proton channel. CF(1) has five subunits: alpha(3), beta(3), gamma(1), delta(1), epsilon(1). CF(0) has three main subunits: a(1), b(2) and c(9-12). The alpha and beta chains form an alternating ring which encloses part of the gamma chain. CF(1) is attached to CF(0) by a central stalk formed by the gamma and epsilon chains, while a peripheral stalk is formed by the delta and b chains.

Its subcellular location is the cell membrane. The catalysed reaction is ATP + H2O + 4 H(+)(in) = ADP + phosphate + 5 H(+)(out). Produces ATP from ADP in the presence of a proton gradient across the membrane. The alpha chain is a regulatory subunit. This chain is ATP synthase subunit alpha 2, found in Listeria innocua serovar 6a (strain ATCC BAA-680 / CLIP 11262).